Consider the following 407-residue polypeptide: Argininosuccinate synthase (407 aa).

ATP-binding positions include 11–19 and alanine 38; that span reads AYSGGLDTS. Residues tyrosine 91 and serine 96 each coordinate L-citrulline. Glycine 121 provides a ligand contact to ATP. 3 residues coordinate L-aspartate: threonine 123, asparagine 127, and aspartate 128. Asparagine 127 contributes to the L-citrulline binding site. 5 residues coordinate L-citrulline: arginine 131, serine 181, serine 190, glutamate 266, and tyrosine 278.

This sequence belongs to the argininosuccinate synthase family. Type 1 subfamily. As to quaternary structure, homotetramer.

Its subcellular location is the cytoplasm. It catalyses the reaction L-citrulline + L-aspartate + ATP = 2-(N(omega)-L-arginino)succinate + AMP + diphosphate + H(+). The protein operates within amino-acid biosynthesis; L-arginine biosynthesis; L-arginine from L-ornithine and carbamoyl phosphate: step 2/3. The chain is Argininosuccinate synthase from Campylobacter concisus (strain 13826).